Consider the following 334-residue polypeptide: Protein-methionine-sulfoxide reductase catalytic subunit MsrP (334 aa).

The segment at residues 1–44 (MKKNQFLKESDVTAESVFFMKRRQVLKALGISAAALSLPHAAHA) is a signal peptide (tat-type signal). Mo-molybdopterin is bound by residues Asn88, 91–92 (YE), Cys146, Thr181, Asn233, Arg238, and 249–251 (GIK).

The protein belongs to the MsrP family. Heterodimer of a catalytic subunit (MsrP) and a heme-binding subunit (MsrQ). Requires Mo-molybdopterin as cofactor. In terms of processing, predicted to be exported by the Tat system. The position of the signal peptide cleavage has not been experimentally proven.

Its subcellular location is the periplasm. It catalyses the reaction L-methionyl-[protein] + a quinone + H2O = L-methionyl-(S)-S-oxide-[protein] + a quinol. It carries out the reaction L-methionyl-[protein] + a quinone + H2O = L-methionyl-(R)-S-oxide-[protein] + a quinol. Its function is as follows. Part of the MsrPQ system that repairs oxidized periplasmic proteins containing methionine sulfoxide residues (Met-O), using respiratory chain electrons. Thus protects these proteins from oxidative-stress damage caused by reactive species of oxygen and chlorine generated by the host defense mechanisms. MsrPQ is essential for the maintenance of envelope integrity under bleach stress, rescuing a wide series of structurally unrelated periplasmic proteins from methionine oxidation, including the primary periplasmic chaperone SurA and the lipoprotein Pal. The catalytic subunit MsrP is non-stereospecific, being able to reduce both (R-) and (S-) diastereoisomers of methionine sulfoxide. The polypeptide is Protein-methionine-sulfoxide reductase catalytic subunit MsrP (Shigella sonnei (strain Ss046)).